We begin with the raw amino-acid sequence, 291 residues long: Hydroxysteroid 11-beta-dehydrogenase 1-like protein A (291 aa).

The N-terminal stretch at 1–18 is a signal peptide; it reads MAGVKLLLLSLCVGYTAY. Residues 40–66, 91–92, and 118–120 each bind NADP(+); these read GSST…TARR, DM, and NHI. Ser-170 is a substrate binding site. Tyr-183 acts as the Proton acceptor in catalysis. Residues 183-187 and 216-222 each bind NADP(+); these read YCASK and GYIDTEN.

Belongs to the short-chain dehydrogenases/reductases (SDR) family.

The protein resides in the secreted. The catalysed reaction is cortisone + NADPH + H(+) = cortisol + NADP(+). Its function is as follows. Unidirectional NADP(+)-dependent cortisol dehydrogenase (in vitro). This is Hydroxysteroid 11-beta-dehydrogenase 1-like protein A (hsd11b1l-a) from Xenopus laevis (African clawed frog).